Reading from the N-terminus, the 512-residue chain is Histidine ammonia-lyase (512 aa).

Residues 142-144 (ASG) constitute a cross-link (5-imidazolinone (Ala-Gly)). The residue at position 143 (serine 143) is a 2,3-didehydroalanine (Ser).

Belongs to the PAL/histidase family. Contains an active site 4-methylidene-imidazol-5-one (MIO), which is formed autocatalytically by cyclization and dehydration of residues Ala-Ser-Gly.

It is found in the cytoplasm. The catalysed reaction is L-histidine = trans-urocanate + NH4(+). It functions in the pathway amino-acid degradation; L-histidine degradation into L-glutamate; N-formimidoyl-L-glutamate from L-histidine: step 1/3. This chain is Histidine ammonia-lyase, found in Bartonella quintana (strain Toulouse) (Rochalimaea quintana).